The sequence spans 570 residues: Ribosome-inactivating protein SNAIf (570 aa).

The first 28 residues, 1–28, serve as a signal peptide directing secretion; sequence MRVVTKLLYLVVLAICGLGIHGALTHTR. Asn40, Asn62, and Asn140 each carry an N-linked (GlcNAc...) asparagine glycan. Glu199 is an active-site residue. Asn232 carries N-linked (GlcNAc...) asparagine glycosylation. Disulfide bonds link Cys284/Cys316, Cys332/Cys351, and Cys373/Cys385. 2 Ricin B-type lectin domains span residues 319 to 439 and 441 to 566; these read VEVT…WTVG and VEPL…WITT. A 1-alpha repeat occupies 329-369; sequence DGLCVDVRDGHYIDGNTVQLGPCGNECNQLWTFRTDGTIRW. The stretch at 370-405 is one 1-beta repeat; it reads LGKCLTTSSSVMIYDCNTVPPEATKWVVSTDGTITN. One copy of the 1-gamma repeat lies at 408 to 440; it reads SGLVLTAPQAAEGTALSLENNIHAARQGWTVGD. One copy of the 2-alpha repeat lies at 452 to 489; the sequence is KQMCLTENGENNFVWLEDCVLNRVEQEWALYGDGTIRV. Cys455 and Cys470 are joined by a disulfide. Asn492 carries N-linked (GlcNAc...) asparagine glycosylation. The 2-beta repeat unit spans residues 493 to 531; the sequence is RSLCVTSEDHEPSDLIVILKCEGSGNQRWVFNTNGTISN. Cys496 and Cys513 are joined by a disulfide. 2 N-linked (GlcNAc...) asparagine glycosylation sites follow: Asn526 and Asn544. The 2-gamma repeat unit spans residues 534-567; it reads AKLVMDVAQSNVSLRKIILYPPTGNPNQQWITTT.

Belongs to the ribosome-inactivating protein family. Type 2 RIP subfamily. Tetramer of four pairs of disulfide bound A-B chains. The precursor is processed in two chains, A and B, that are linked by a disulfide bond. A small truncated form corresponding roughly to the second ricin B-type lectin domain of the B chain, TrSNAIf, can also be produced. Post-translationally, N-glycosylated. In terms of tissue distribution, expressed in fruits.

The enzyme catalyses Endohydrolysis of the N-glycosidic bond at one specific adenosine on the 28S rRNA.. In terms of biological role, neu5Ac(alpha2-6)Gal/GalNAc specific agglutinin. Behaves as a type-2 ribosome-inactivating protein. Strongly inhibits mammalian but not plant ribosomes. The A chain is responsible for inhibiting protein synthesis through the catalytic inactivation of 60S ribosomal subunits by removing adenine from position 4,324 of 28S rRNA. The B chain binds to cell receptors and probably facilitates the entry into the cell of the A chain; B chains are also responsible for cell agglutination (lectin activity). Involved in plant defense against insects. Its function is as follows. Binds Neu5Ac(alpha2-6)Gal/GalNAc but has no clear agglutination activity. The sequence is that of Ribosome-inactivating protein SNAIf from Sambucus nigra (European elder).